Here is a 481-residue protein sequence, read N- to C-terminus: Heat stress transcription factor A-1b (481 aa).

A compositionally biased stretch (low complexity) spans 1–16 (MESVPESVPSPNSNTP). Residues 1-23 (MESVPESVPSPNSNTPSIPPPVN) are disordered. A DNA-binding region spans residues 25–119 (VPPFLSKTYD…LLKSIVRRKP (95 aa)). The tract at residues 138–204 (ACVEVGKFGI…QMMSFLAKAV (67 aa)) is hydrophobic repeat HR-A/B. A compositionally biased stretch (polar residues) spans 213 to 227 (LVQQNNNDGNRQIPG). The tract at residues 213–244 (LVQQNNNDGNRQIPGSNKKRRLPVDEQENRGD) is disordered. A Nuclear localization signal motif is present at residues 229–233 (NKKRR). Residues 234 to 243 (LPVDEQENRG) show a composition bias toward basic and acidic residues. Residues 418 to 427 (DPFWEQFFSV) carry the AHA motif. Residues 467–474 (LTEQMGLL) carry the Nuclear export signal motif.

This sequence belongs to the HSF family. Class A subfamily. As to quaternary structure, homotrimer. Binds to HSBP. Exhibits temperature-dependent phosphorylation.

It localises to the cytoplasm. It is found in the nucleus. Functionally, transcriptional activator that specifically binds DNA sequence 5'-AGAAnnTTCT-3' known as heat shock promoter elements (HSE). This chain is Heat stress transcription factor A-1b (HSFA1B), found in Arabidopsis thaliana (Mouse-ear cress).